A 210-amino-acid chain; its full sequence is Large ribosomal subunit protein bL25 (210 aa).

Low complexity predominate over residues 191-200 (EAPAEGAAAP). The tract at residues 191-210 (EAPAEGAAAPAPAPAKKGKK) is disordered.

It belongs to the bacterial ribosomal protein bL25 family. CTC subfamily. In terms of assembly, part of the 50S ribosomal subunit; part of the 5S rRNA/L5/L18/L25 subcomplex. Contacts the 5S rRNA. Binds to the 5S rRNA independently of L5 and L18.

Its function is as follows. This is one of the proteins that binds to the 5S RNA in the ribosome where it forms part of the central protuberance. This is Large ribosomal subunit protein bL25 from Paracidovorax citrulli (strain AAC00-1) (Acidovorax citrulli).